We begin with the raw amino-acid sequence, 258 residues long: Small ribosomal subunit protein uS15m (258 aa).

The N-terminal 57 residues, 1-57, are a transit peptide targeting the mitochondrion; that stretch reads MLRAAWRALSSVRAQAVTRAPVPALRGGSSASLLSARCGLQPPSLLRAARAYAAVQK. Positions 229 to 258 are disordered; the sequence is KAAAAAAKKEKNEGVPENPSNAVPEKTQVN.

It belongs to the universal ribosomal protein uS15 family. In terms of assembly, component of the mitochondrial ribosome small subunit (28S) which comprises a 12S rRNA and about 30 distinct proteins. Interacts with METTL17.

Its subcellular location is the mitochondrion matrix. The chain is Small ribosomal subunit protein uS15m (Mrps15) from Mus musculus (Mouse).